Here is a 2009-residue protein sequence, read N- to C-terminus: MSEQNSVVNAEKGDGEISSNVETASSVNPSVKPQNAIKEEAKETNGEDQKCKGPENAGSTAETKETSNDATNGMKTPEETEDTNDKRHDDEGEDGDEDEDEDEDEDEDNGDEDDEDVDSSSSETSSEDGEDSESVSGESTESSSGEDEESDESDGNTSNSSSGDESGSEEEEEEEEEEEEEENAGEPAIAHQDSVPTNDSTAPRSTHTRNISLSSNGSNTNSTIILVKTTLETILNDKDIKKNSNAQKAIERTLQKFKEFDPQTTNNPHYVDSILVFEALRASCRTKSSKVQSLALDCLSKLFSFRSLDETLLVNPPDSLASNDQRQDAADGITPPPKQKIIDAAIDTISDCFQGEGTDDRVELQIVRALSSCILEEDSSSLCHGASLLKAIRTIYNVFVFSLNPSNQGIAQATLTQIISSVYDKIDLKQSTSSAVSLSTKNHQQQSAIELSEASENAETPAPLTLENMDKLNDDEERLMDAQQPDSIAITNQDLAVKDAFLVFRVMAKICAKPLETELDMRSHAVRSKLLSLHIIYSIIKDHIDVFLSHNIFLPGKERVCFIDSIRQYLRLVLSRNAASPLAPVFEVTLEIMWLLIANLRADFVKEIPVFLTEIYFPISELTTSTSQQKRYFLSVIQRICNDPRTLVEFYLNYDCNPGMPNVMEITVDYLTRLALTRVEITQTQRSYYDEQISKSLSTYNFSQLPLLTSSNLSSSPDVGQVNLLFPLDFALKMVSLNCIVSVLRSLSSWAHKALNPNTHTANKVLLNTTSSARQESRSSLSNDVRSSIMTSNDDFKPTYEDEESRSLSSQNIDADDPTQFENLKLRKTALSECIAIFNNKPKKAIPVLIKKGFLKDDSPISIAKWLLETEGLDMAAVGDYLGEGDDKNIAIMHAFVDEFDFTGMSIVDALRSFLQSFRLPGEGQKIDRFMLKFAERFVDQNPGVFSKADTAYVLSYSLIMLNTDLHSSQIKNKMSLQEFLENNEGIDNGRDLPRDFLEGLFNEIANNEIKLISEQHQAMLSGDTNLVQQQQSAFNFFNSRDLTREAYNQVSKEISSKTELVFKNLNKNKGGPDVYYAASHVEHVKSIFETLWMSFLAALTPPFKDYDDIDTTNKCLEGLKISIKIASTFRINDARTSFVGALVQFCNLQNLEEIKVKNVNAMVILLEVALSEGNYLEGSWKDILLVVSQMERLQLISKGIDRDTVPDVAQARVANPRVSYESSRSNNTSFFDVWGKKATPTELAQEKHHNQTLSPEISKFISSSELVVLMDNIFTKSSELSGNAIVDFIKALTAVSLEEIESSENASTPRMFSLQKMVDVCYYNMDRIKLEWTPLWAVMGKAFNKIATNSNLAVVFFAIDSLRQLSMRFLDIEELSGFEFQHDFLKPFEYTVQNSGNTEVQEMIIECFRNFILTKSESIKSGWKPILESLQYTARSSTESIVLKTQLLVSNDIVTNHFENVFSQEDAFSELVGVFREITKNKRFQKLSLHALESLRKMTQNVADICFYNENKTEEERKHNDALLRGKDIFQDVWFPMLFCFNDTIMTAEDLEVRSRALNYMFDALVAYGGKFNDDFWEKICKKLLFPIFGVLSKHWEVNQFNSHDDLSVWLSTTLIQALRNLIALFTHYFESLNRMLDGFLGLLVSCICQENDTIARIGRSCLQQLILQNVSKFNEYHWNQIGDVFDKLFDLTTANELFDYDPLQQGRKSSVSHHQTTNDTSQHSDDDSNDRRENDSNISETVERAHQEESSEDVGGDMVETLNGQTKLNNGNSVPTVKDELNPKPASLSIPKKTKHMKRNESNEDIRRRINIKNSIVVKCVLQLLMIELLNELFENEDFAHCIPYKEAIRITRLLEKSYEFSRDFNEDYGLRTRLVEARVVDKIPNLLKQETSAAAVLLDIMFQLYLNDDEKKADLITRLITICIQVVEGYVSLDDRTMERSINAWRSVIVEILQGYYEFDDEDFRLYCPAMYALVIQILDKSVPTELRHAIKQFLSRVGELYLSTD.

The tract at residues M1–T220 is disordered. Polar residues predominate over residues I17 to P33. The segment covering I37 to G53 has biased composition (basic and acidic residues). The span at E91–D118 shows a compositional bias: acidic residues. The span at S134–S143 shows a compositional bias: low complexity. A compositionally biased stretch (acidic residues) spans S144–D154. Positions G155–E165 are enriched in low complexity. Residues S166 to A184 show a composition bias toward acidic residues. The span at S194–R209 shows a compositional bias: polar residues. The span at N210 to T220 shows a compositional bias: low complexity. 2 positions are modified to phosphoserine: S212 and S215. T334 carries the phosphothreonine modification. Residues S447, S452, and S455 each carry the phosphoserine modification. An HUS box motif is present at residues N653 to N657. Positions S771 to S788 are enriched in low complexity. Residues S771–D814 form a disordered region. A Glycyl lysine isopeptide (Lys-Gly) (interchain with G-Cter in ubiquitin) cross-link involves residue K797. The residue at position 807 (S807) is a Phosphoserine. Positions L824–I1010 constitute an SEC7 domain. D940 serves as a coordination point for Mg(2+). Residues H1017–S1220 form an HDS1 domain region. Position 1226 is a phosphoserine (S1226). The residue at position 1240 (T1240) is a Phosphothreonine. Over residues G1708–S1723 the composition is skewed to polar residues. Residues G1708–E1803 are disordered. Positions Q1724–E1751 are enriched in basic and acidic residues. S1741 and S1752 each carry phosphoserine. Residues L1764 to P1777 are compositionally biased toward polar residues. Positions F1836–V1883 are C2 domain-interacting region (CIR).

In terms of assembly, interacts with ARF1. Interacts (via C-terminus) with RSP5 ubiquitin ligase.

The protein resides in the cytoplasm. It localises to the golgi apparatus. The protein localises to the trans-Golgi network. Its subcellular location is the cytoplasmic vesicle. It is found in the COPI-coated vesicle membrane. The protein resides in the COPII-coated vesicle membrane. Guanine exchange factor that acts as an activator of ARF1 at the trans-Golgi network and is thus involved in vesicular budding and traffic between compartments of the Golgi apparatus. Activation of Arf (ADP-ribosylation factor) GTPases is essential for vesicle formation via recruitment of cargo adapters and coat proteins necessary for Golgi trafficking. Also plays an essential role in ER-to-Golgi traffic. SEC7 also acts as an effector of two Rab GTPases, YPT1 and YPT31/32. This is ADP-ribosylation factor guanine nucleotide-exchange factor SEC7 from Saccharomyces cerevisiae (strain ATCC 204508 / S288c) (Baker's yeast).